Here is a 26-residue protein sequence, read N- to C-terminus: Alpha-amylase inhibitor 1 (26 aa).

It belongs to the protease inhibitor I6 (cereal trypsin/alpha-amylase inhibitor) family.

It is found in the secreted. Its function is as follows. Alpha-amylase inhibitor. This Saussurea costus (Costus) protein is Alpha-amylase inhibitor 1.